The primary structure comprises 309 residues: Homoserine kinase (309 aa).

91–101 (PIGSGLGSSAC) contacts ATP.

The protein belongs to the GHMP kinase family. Homoserine kinase subfamily.

It localises to the cytoplasm. The catalysed reaction is L-homoserine + ATP = O-phospho-L-homoserine + ADP + H(+). It participates in amino-acid biosynthesis; L-threonine biosynthesis; L-threonine from L-aspartate: step 4/5. Functionally, catalyzes the ATP-dependent phosphorylation of L-homoserine to L-homoserine phosphate. This is Homoserine kinase from Photorhabdus laumondii subsp. laumondii (strain DSM 15139 / CIP 105565 / TT01) (Photorhabdus luminescens subsp. laumondii).